The sequence spans 415 residues: Multidrug resistance protein MdtA (415 aa).

Residues 1-21 (MKGSYKSRWVIVIVVVIAAIA) form the signal peptide. Residues 31-47 (DSQSAAPGATKQAQQSP) are compositionally biased toward polar residues. Disordered stretches follow at residues 31–60 (DSQSAAPGATKQAQQSPAGGRRGMRSGPLA) and 392–415 (EAQSTTTSEEKATSREYAKKGARS). Basic and acidic residues predominate over residues 399-415 (SEEKATSREYAKKGARS).

Belongs to the membrane fusion protein (MFP) (TC 8.A.1) family. As to quaternary structure, part of a tripartite efflux system composed of MdtA, MdtB and MdtC.

It localises to the cell inner membrane. Functionally, the MdtABC tripartite complex confers resistance against novobiocin and deoxycholate. The protein is Multidrug resistance protein MdtA of Escherichia coli O139:H28 (strain E24377A / ETEC).